A 293-amino-acid polypeptide reads, in one-letter code: N-acetylmannosamine kinase (293 aa).

ATP is bound by residues 5–12 (AIDIGGTK) and 133–140 (GVGGGLVI). 4 residues coordinate Zn(2+): His157, Cys167, Cys169, and Cys174.

This sequence belongs to the ROK (NagC/XylR) family. NanK subfamily. In terms of assembly, homodimer.

It carries out the reaction an N-acyl-D-mannosamine + ATP = an N-acyl-D-mannosamine 6-phosphate + ADP + H(+). It participates in amino-sugar metabolism; N-acetylneuraminate degradation; D-fructose 6-phosphate from N-acetylneuraminate: step 2/5. Its function is as follows. Catalyzes the phosphorylation of N-acetylmannosamine (ManNAc) to ManNAc-6-P. The polypeptide is N-acetylmannosamine kinase (Vibrio vulnificus (strain YJ016)).